The primary structure comprises 81 residues: uncharacterized protein (81 aa).

The protein to Synechocystis PCC 6803 ssr2439.

Its function is as follows. May have a regulatory function. This is an uncharacterized protein from Synechococcus elongatus (strain ATCC 33912 / PCC 7942 / FACHB-805) (Anacystis nidulans R2).